We begin with the raw amino-acid sequence, 520 residues long: Ribonuclease Y (520 aa).

A helical membrane pass occupies residues 3–23 (IEIAIVLILAAAGLGYFVGNM). Residues 210 to 273 (SVSVVALPSD…EVAKIALEKL (64 aa)) enclose the KH domain. The 94-residue stretch at 336 to 429 (VYQHSLEVAF…VQAADALSGA (94 aa)) folds into the HD domain.

This sequence belongs to the RNase Y family.

It localises to the cell membrane. Endoribonuclease that initiates mRNA decay. The sequence is that of Ribonuclease Y from Geobacter metallireducens (strain ATCC 53774 / DSM 7210 / GS-15).